Reading from the N-terminus, the 424-residue chain is MAIEQMTMPQLGESVTEGTISKWLVAPGDKVNKYDPIAEVMTDKVNAEVPSSFTGTITELVGEEGQTLQVGEMICKIETEGANPAEQKQEQPAASEAAENPVAKSAGAADQPNKKRYSPAVLRLAGEHGIDLDQVTGTGAGGRITRKDIQRLIETGGVQEQNPEELKTAAPAPKSASKPEPKEETSYPASAAGDKEIPVTGVRKAIASNMKRSKTEIPHAWTMMEVDVTNMVAYRNSIKDSFKKTEGFNLTFFAFFVKAVAQALKEFPQMNSMWAGDKIIQKKDINISIAVATEDSLFVPVIKNADEKTIKGIAKDITGLAKKVRDGKLTADDMQGGTFTVNNTGSFGSVQSMGIINYPQAAILQVESIVKRPVVMDNGMIAVRDMVNLCLSLDHRVLDGLVCGRFLGRVKQILESIDEKTSVY.

Positions 3 to 78 (IEQMTMPQLG…QVGEMICKIE (76 aa)) constitute a Lipoyl-binding domain. Lysine 44 is subject to N6-lipoyllysine. Residues 82 to 115 (ANPAEQKQEQPAASEAAENPVAKSAGAADQPNKK) form a disordered region. In terms of domain architecture, Peripheral subunit-binding (PSBD) spans 116–153 (RYSPAVLRLAGEHGIDLDQVTGTGAGGRITRKDIQRLI). A disordered region spans residues 154–193 (ETGGVQEQNPEELKTAAPAPKSASKPEPKEETSYPASAAG). Active-site residues include histidine 395 and aspartate 399.

Belongs to the 2-oxoacid dehydrogenase family. Forms a 24-polypeptide structural core with octahedral symmetry. It depends on (R)-lipoate as a cofactor.

The enzyme catalyses N(6)-[(R)-dihydrolipoyl]-L-lysyl-[protein] + 2-methylpropanoyl-CoA = N(6)-[(R)-S(8)-2-methylpropanoyldihydrolipoyl]-L-lysyl-[protein] + CoA. In terms of biological role, the branched-chain alpha-keto dehydrogenase complex catalyzes the overall conversion of alpha-keto acids to acyl-CoA and CO(2). It contains multiple copies of three enzymatic components: branched-chain alpha-keto acid decarboxylase (E1), lipoamide acyltransferase (E2) and lipoamide dehydrogenase (E3). This is Lipoamide acyltransferase component of branched-chain alpha-keto acid dehydrogenase complex (bfmBB) from Bacillus subtilis (strain 168).